We begin with the raw amino-acid sequence, 411 residues long: ATP-dependent RNA helicase eIF4A (411 aa).

The segment at 1–23 (MSKPEDTSAAAAAPAGEAGNNLN) is disordered. Residues 9–19 (AAAAAPAGEAG) are compositionally biased toward low complexity. The Q motif signature appears at 38 to 66 (DNFDNMELKEELLRGVYAYGFERPSAIQA). The Helicase ATP-binding domain maps to 69-239 (IVPVIKGHDV…KKFMRDPIRI (171 aa)). An ATP-binding site is contributed by 82–89 (AQSGTGKT). Residues 187-190 (DEAD) carry the DEAD box motif. Residues 250–411 (GIKQFYVAVE…EMPLNVADLI (162 aa)) form the Helicase C-terminal domain.

It belongs to the DEAD box helicase family. eIF4A subfamily. In terms of assembly, component of the eIF4F complex, which composition varies with external and internal environmental conditions. It is composed of at least eIF4A, eIF4E and eIF4G.

It localises to the cytoplasm. It catalyses the reaction ATP + H2O = ADP + phosphate + H(+). Its function is as follows. ATP-dependent RNA helicase which is a subunit of the eIF4F complex involved in cap recognition and is required for mRNA binding to ribosome. In the current model of translation initiation, eIF4A unwinds RNA secondary structures in the 5'-UTR of mRNAs which is necessary to allow efficient binding of the small ribosomal subunit, and subsequent scanning for the initiator codon. The polypeptide is ATP-dependent RNA helicase eIF4A (TIF1) (Mycosarcoma maydis (Corn smut fungus)).